We begin with the raw amino-acid sequence, 491 residues long: Glutamyl-tRNA(Gln) amidotransferase subunit A (491 aa).

Catalysis depends on charge relay system residues Lys77 and Ser152. The Acyl-ester intermediate role is filled by Ser176.

Belongs to the amidase family. GatA subfamily. Heterotrimer of A, B and C subunits.

It catalyses the reaction L-glutamyl-tRNA(Gln) + L-glutamine + ATP + H2O = L-glutaminyl-tRNA(Gln) + L-glutamate + ADP + phosphate + H(+). Functionally, allows the formation of correctly charged Gln-tRNA(Gln) through the transamidation of misacylated Glu-tRNA(Gln) in organisms which lack glutaminyl-tRNA synthetase. The reaction takes place in the presence of glutamine and ATP through an activated gamma-phospho-Glu-tRNA(Gln). The sequence is that of Glutamyl-tRNA(Gln) amidotransferase subunit A from Chlamydia abortus (strain DSM 27085 / S26/3) (Chlamydophila abortus).